A 530-amino-acid polypeptide reads, in one-letter code: MATATIALGTDSIKMENGQGTAAKLGLPPLTPEQQEALQKAKKYAMEQSIKSVLVKQTIAHQQQQLTNLQMAAVTMGFGDPLSPLQSMAAQRQRALAIMCRVYVGSIYYELGEDTIRQAFAPFGPIKSIDMSWDSVTMKHKGFAFVEYEVPEAAQLALEQMNSVMLGGRNIKVGRPSNIGQAQPIIDQLAEEARAFNRIYVASVHQDLSDDDIKSVFEAFGKIKSCTLARDPTTGKHKGYGFIEYEKAQSSQDAVSSMNLFDLGGQYLRVGKAVTPPMPLLTPATPGGLPPAAAVAAAAATAKITAQEAVAGAAVLGTLATPGLVSPALTLAQPLGALPQAVMAAQAPGVITGVTPARPPIPVTIPSVGVVNPILASPPTLGLLEPKKEKEEEELFPESERPEMLSEQEHMSISGSSARHMVMQKLLRKQESTVMVLRNMVDPKDIDDDLEGEVTEECGKFGAVNRVIIYQEKQGEEEDAEIIVKIFVEFSVASETHKAIQDLNGRWFAGRKVVAEVYDQERFDNSDLSA.

The inhibits homodimerization stretch occupies residues 1 to 487; sequence MATATIALGT…EDAEIIVKIF (487 aa). A Glycyl lysine isopeptide (Lys-Gly) (interchain with G-Cter in SUMO2) cross-link involves residue Lys-14. Thr-31 carries the post-translational modification Phosphothreonine. The interval 48 to 530 is inhibits transcriptional repression, interaction with ERCC3 and apoptosis induction; the sequence is QSIKSVLVKQ…ERFDNSDLSA (483 aa). Residue Lys-51 forms a Glycyl lysine isopeptide (Lys-Gly) (interchain with G-Cter in SUMO2) linkage. Position 83 is a phosphoserine (Ser-83). 2 RRM domains span residues 100–178 and 197–275; these read CRVY…RPSN and NRIY…KAVT. At Ser-215 the chain carries Phosphoserine. Lys-222 is modified (N6-acetyllysine). Residue Thr-285 is modified to Phosphothreonine. The tract at residues 387-408 is disordered; the sequence is KKEKEEEELFPESERPEMLSEQ. Lys-390 is covalently cross-linked (Glycyl lysine isopeptide (Lys-Gly) (interchain with G-Cter in SUMO2)). Basic and acidic residues predominate over residues 398–408; it reads ESERPEMLSEQ. The residue at position 425 (Lys-425) is an N6-acetyllysine. Lys-429 participates in a covalent cross-link: Glycyl lysine isopeptide (Lys-Gly) (interchain with G-Cter in SUMO2). In terms of domain architecture, RRM 3; atypical spans 433-520; it reads TVMVLRNMVD…RKVVAEVYDQ (88 aa).

This sequence belongs to the RRM half pint family. Homodimer. Associates with the spliceosome. Found in a complex with RO60 and Y5 RNA. Found in a complex with FUBP1 and far upstream element (FUSE) DNA segment. Interacts directly with ERCC3. Interacts with CDK7 and GTF2H1. Interacts with SRSF11/P54. Interacts with ARGLU1; interaction may be involved in ARGLU1-mediated modulation of alternative splicing.

The protein localises to the nucleus. DNA- and RNA-binding protein, involved in several nuclear processes such as pre-mRNA splicing, apoptosis and transcription regulation. In association with FUBP1 regulates MYC transcription at the P2 promoter through the core-TFIIH basal transcription factor. Acts as a transcriptional repressor through the core-TFIIH basal transcription factor. Represses FUBP1-induced transcriptional activation but not basal transcription. Decreases ERCC3 helicase activity. Is also involved in pre-mRNA splicing. Promotes splicing of an intron with weak 3'-splice site and pyrimidine tract in a cooperative manner with U2AF2. Involved in apoptosis induction when overexpressed in HeLa cells. Modulates alternative splicing of several mRNAs. Binds to relaxed DNA of active promoter regions. Binds to the pyrimidine tract and 3'-splice site regions of pre-mRNA; binding is enhanced in presence of U2AF2. Binds to Y5 RNA in association with RO60. Binds to poly(U) RNA. This Bos taurus (Bovine) protein is Poly(U)-binding-splicing factor PUF60.